We begin with the raw amino-acid sequence, 322 residues long: GTP 3',8-cyclase (322 aa).

The Radical SAM core domain occupies 4 to 229; sequence NFNRNIDYLR…IPVQMKKSGP (226 aa). Residue Arg-13 participates in GTP binding. Cys-20 and Cys-24 together coordinate [4Fe-4S] cluster. Tyr-26 is a binding site for S-adenosyl-L-methionine. Position 27 (Cys-27) interacts with [4Fe-4S] cluster. Position 64 (Arg-64) interacts with GTP. Residue Gly-68 coordinates S-adenosyl-L-methionine. Thr-95 contacts GTP. Ser-119 is a binding site for S-adenosyl-L-methionine. Residue Lys-156 coordinates GTP. Met-190 serves as a coordination point for S-adenosyl-L-methionine. [4Fe-4S] cluster-binding residues include Cys-253 and Cys-256. Residue 258 to 260 coordinates GTP; the sequence is RLR. Cys-270 is a binding site for [4Fe-4S] cluster.

The protein belongs to the radical SAM superfamily. MoaA family. As to quaternary structure, monomer and homodimer. [4Fe-4S] cluster serves as cofactor.

The enzyme catalyses GTP + AH2 + S-adenosyl-L-methionine = (8S)-3',8-cyclo-7,8-dihydroguanosine 5'-triphosphate + 5'-deoxyadenosine + L-methionine + A + H(+). The protein operates within cofactor biosynthesis; molybdopterin biosynthesis. Catalyzes the cyclization of GTP to (8S)-3',8-cyclo-7,8-dihydroguanosine 5'-triphosphate. The polypeptide is GTP 3',8-cyclase (Thermodesulfovibrio yellowstonii (strain ATCC 51303 / DSM 11347 / YP87)).